A 330-amino-acid polypeptide reads, in one-letter code: Ribosomal RNA large subunit methyltransferase F (330 aa).

The protein belongs to the methyltransferase superfamily. METTL16/RlmF family.

It is found in the cytoplasm. It carries out the reaction adenosine(1618) in 23S rRNA + S-adenosyl-L-methionine = N(6)-methyladenosine(1618) in 23S rRNA + S-adenosyl-L-homocysteine + H(+). In terms of biological role, specifically methylates the adenine in position 1618 of 23S rRNA. The polypeptide is Ribosomal RNA large subunit methyltransferase F (Pseudoalteromonas atlantica (strain T6c / ATCC BAA-1087)).